We begin with the raw amino-acid sequence, 1415 residues long: DNA-directed RNA polymerase subunit beta' (1415 aa).

Residues Cys69, Cys71, Cys84, and Cys87 each coordinate Zn(2+). 3 residues coordinate Mg(2+): Asp461, Asp463, and Asp465. Residues Cys805, Cys879, Cys886, and Cys889 each coordinate Zn(2+).

Belongs to the RNA polymerase beta' chain family. The RNAP catalytic core consists of 2 alpha, 1 beta, 1 beta' and 1 omega subunit. When a sigma factor is associated with the core the holoenzyme is formed, which can initiate transcription. The cofactor is Mg(2+). It depends on Zn(2+) as a cofactor.

It carries out the reaction RNA(n) + a ribonucleoside 5'-triphosphate = RNA(n+1) + diphosphate. In terms of biological role, DNA-dependent RNA polymerase catalyzes the transcription of DNA into RNA using the four ribonucleoside triphosphates as substrates. The sequence is that of DNA-directed RNA polymerase subunit beta' from Anaplasma marginale (strain Florida).